The sequence spans 120 residues: Large ribosomal subunit protein uL18 (120 aa).

It belongs to the universal ribosomal protein uL18 family. Part of the 50S ribosomal subunit; part of the 5S rRNA/L5/L18/L25 subcomplex. Contacts the 5S and 23S rRNAs.

This is one of the proteins that bind and probably mediate the attachment of the 5S RNA into the large ribosomal subunit, where it forms part of the central protuberance. The protein is Large ribosomal subunit protein uL18 of Hyphomonas neptunium (strain ATCC 15444).